Reading from the N-terminus, the 186-residue chain is NADH-quinone oxidoreductase subunit I (186 aa).

4Fe-4S ferredoxin-type domains lie at 70 to 100 and 113 to 142; these read LTTR…IQSA and DRFE…MSKD. The [4Fe-4S] cluster site is built by C80, C83, C86, C90, C122, C125, C128, and C132.

This sequence belongs to the complex I 23 kDa subunit family. As to quaternary structure, NDH-1 is composed of 14 different subunits. Subunits NuoA, H, J, K, L, M, N constitute the membrane sector of the complex. Requires [4Fe-4S] cluster as cofactor.

It localises to the cell inner membrane. It carries out the reaction a quinone + NADH + 5 H(+)(in) = a quinol + NAD(+) + 4 H(+)(out). NDH-1 shuttles electrons from NADH, via FMN and iron-sulfur (Fe-S) centers, to quinones in the respiratory chain. The immediate electron acceptor for the enzyme in this species is believed to be ubiquinone. Couples the redox reaction to proton translocation (for every two electrons transferred, four hydrogen ions are translocated across the cytoplasmic membrane), and thus conserves the redox energy in a proton gradient. The sequence is that of NADH-quinone oxidoreductase subunit I from Pelobacter propionicus (strain DSM 2379 / NBRC 103807 / OttBd1).